A 237-amino-acid polypeptide reads, in one-letter code: Derlin-2 (237 aa).

Residues 1–20 are Cytoplasmic-facing; the sequence is MNGVVAALEEMPPVTRFYTG. The helical transmembrane segment at 21–41 threads the bilayer; it reads ACVLLTTAVHLEFVTPFHLYF. The Lumenal segment spans residues 42–54; that stretch reads NWELIIRKYQFWR. A helical transmembrane segment spans residues 55 to 75; it reads LITSFCFFGSFGFSFLFNMIF. Over 76–97 the chain is Cytoplasmic; sequence TYRYCMMLEEGSFRGRRADFVY. Residues 98-118 traverse the membrane as a helical segment; it reads MFLFGAVLMILSGIFVQILFL. The Lumenal segment spans residues 119 to 166; the sequence is GQAFTIMLVYIWSRRNPMIQMNFFGVLTFTAPYLPWVLLLFSLLLGNN. A helical membrane pass occupies residues 167–187; sequence AVVDFMGIACGHIYFFLEDVF. Residues 188–237 are Cytoplasmic-facing; that stretch reads PFQEHGKRFLKTPQWLVYLFDERRPEPLPEDERPGGFEWGDEQPEQEQHD. Over residues 212-222 the composition is skewed to basic and acidic residues; sequence PEPLPEDERPG. Residues 212-237 are disordered; it reads PEPLPEDERPGGFEWGDEQPEQEQHD. A compositionally biased stretch (acidic residues) spans 226-237; the sequence is WGDEQPEQEQHD.

This sequence belongs to the derlin family.

It localises to the endoplasmic reticulum membrane. Functionally, may be required for the degradation process of some specific misfolded endoplasmic reticulum (ER) luminal proteins. Participates in the transfer of misfolded proteins from the ER to the cytosol, where they are destroyed by the proteasome in a ubiquitin-dependent manner. Its precise function remains unclear, but its ability to complement der1 mutations in C.cerevisiae, suggests a similar function in the degradation of ER misfolded proteins. This is Derlin-2 from Caenorhabditis elegans.